The primary structure comprises 216 residues: Adenylate kinase (216 aa).

10–15 (GAGKGT) lines the ATP pocket. The tract at residues 30–59 (STGDMFRAAMKAETEMGLQAKSFIDKGALV) is NMP. AMP is bound by residues threonine 31, arginine 36, 57-59 (ALV), 85-88 (GFPR), and glutamine 92. Residues 126-163 (GRRICKECGATYHLEFNAPAKADVCDKCGGELYQRSDD) form an LID region. Arginine 127 contributes to the ATP binding site. 2 residues coordinate Zn(2+): cysteine 130 and cysteine 133. An ATP-binding site is contributed by 136–137 (TY). Cysteine 150 and cysteine 153 together coordinate Zn(2+). Arginine 160 and arginine 171 together coordinate AMP. Glutamine 199 contacts ATP.

It belongs to the adenylate kinase family. In terms of assembly, monomer.

It is found in the cytoplasm. The enzyme catalyses AMP + ATP = 2 ADP. It functions in the pathway purine metabolism; AMP biosynthesis via salvage pathway; AMP from ADP: step 1/1. Its function is as follows. Catalyzes the reversible transfer of the terminal phosphate group between ATP and AMP. Plays an important role in cellular energy homeostasis and in adenine nucleotide metabolism. The protein is Adenylate kinase of Bacillus anthracis (strain A0248).